The sequence spans 216 residues: UPF0301 protein BBta_6966 (216 aa).

The protein belongs to the UPF0301 (AlgH) family.

In Bradyrhizobium sp. (strain BTAi1 / ATCC BAA-1182), this protein is UPF0301 protein BBta_6966.